The sequence spans 454 residues: MTPYLAAEDLSMFGRDPWWLVVVKAVFCFAFLMITVLFSIVWERKVVAWMQLRIGPNRHGPWGMLQSLADGIKLMLKEDLIVKRADKVVYVLAPIVAAIPAFMAIAVIPFGPADNEISIFGHRTAMQLTDLPIAMLYILAVASVGIYGIVLAGWSSGSTYPLLGGLRSCAQMISYEIAMGAAFASVFLYSGSMSTSTIVEQQHDRWYIVLLPVSFVIYIVTMVGETNRAPFDMPESEGDLVGGFNTEYSSIKFAMFMLAEYVNMVTVSAVSTTLFLGGWRAPWPISTFWEGANHGWWPMLWFVVKVQLLLFFFIWLRGTLPRVRYDQLMKLGWKVLIPVSVVWLMLVATVRTLRNENYDFADIALYVGGGVLVLLLLSFVADMFREKSKEAAAPAEEPAAFDPMAGGFPVPPLPGQTLPPVPRRRPRRDRELIVSGGPDTASDGPANGKEASDG.

The next 9 membrane-spanning stretches (helical) occupy residues 18–38, 88–108, 131–151, 172–192, 206–226, 256–276, 296–316, 328–348, and 360–380; these read WWLV…TVLF, VVYV…IAVI, LPIA…GIVL, MISY…YSGS, WYIV…VGET, FMLA…TLFL, WWPM…FIWL, LMKL…MLVA, and FADI…LSFV. Residues 395–454 are disordered; sequence AEEPAAFDPMAGGFPVPPLPGQTLPPVPRRRPRRDRELIVSGGPDTASDGPANGKEASDG. The segment covering 409–421 has biased composition (pro residues); the sequence is PVPPLPGQTLPPV.

Belongs to the complex I subunit 1 family. In terms of assembly, NDH-1 is composed of 14 different subunits. Subunits NuoA, H, J, K, L, M, N constitute the membrane sector of the complex.

The protein localises to the cell membrane. It carries out the reaction a quinone + NADH + 5 H(+)(in) = a quinol + NAD(+) + 4 H(+)(out). NDH-1 shuttles electrons from NADH, via FMN and iron-sulfur (Fe-S) centers, to quinones in the respiratory chain. The immediate electron acceptor for the enzyme in this species is believed to be ubiquinone. Couples the redox reaction to proton translocation (for every two electrons transferred, four hydrogen ions are translocated across the cytoplasmic membrane), and thus conserves the redox energy in a proton gradient. This subunit may bind ubiquinone. This is NADH-quinone oxidoreductase subunit H from Streptomyces avermitilis (strain ATCC 31267 / DSM 46492 / JCM 5070 / NBRC 14893 / NCIMB 12804 / NRRL 8165 / MA-4680).